A 316-amino-acid polypeptide reads, in one-letter code: Methionyl-tRNA formyltransferase (316 aa).

112 to 115 (SLLP) serves as a coordination point for (6S)-5,6,7,8-tetrahydrofolate.

The protein belongs to the Fmt family.

The enzyme catalyses L-methionyl-tRNA(fMet) + (6R)-10-formyltetrahydrofolate = N-formyl-L-methionyl-tRNA(fMet) + (6S)-5,6,7,8-tetrahydrofolate + H(+). In terms of biological role, attaches a formyl group to the free amino group of methionyl-tRNA(fMet). The formyl group appears to play a dual role in the initiator identity of N-formylmethionyl-tRNA by promoting its recognition by IF2 and preventing the misappropriation of this tRNA by the elongation apparatus. The protein is Methionyl-tRNA formyltransferase of Haemophilus ducreyi (strain 35000HP / ATCC 700724).